Reading from the N-terminus, the 80-residue chain is Metallothionein-like protein type 2, MT2-22 (80 aa).

The protein belongs to the metallothionein superfamily. Type 15 family.

Functionally, metallothioneins have a high content of cysteine residues that bind various heavy metals. This is Metallothionein-like protein type 2, MT2-22 from Brassica juncea (Indian mustard).